The following is a 468-amino-acid chain: UDP-N-acetylmuramoylalanine--D-glutamate ligase (468 aa).

127 to 133 (GTNGKTT) is a binding site for ATP.

It belongs to the MurCDEF family.

It is found in the cytoplasm. It catalyses the reaction UDP-N-acetyl-alpha-D-muramoyl-L-alanine + D-glutamate + ATP = UDP-N-acetyl-alpha-D-muramoyl-L-alanyl-D-glutamate + ADP + phosphate + H(+). It functions in the pathway cell wall biogenesis; peptidoglycan biosynthesis. Its function is as follows. Cell wall formation. Catalyzes the addition of glutamate to the nucleotide precursor UDP-N-acetylmuramoyl-L-alanine (UMA). The chain is UDP-N-acetylmuramoylalanine--D-glutamate ligase from Prochlorococcus marinus (strain MIT 9312).